The primary structure comprises 288 residues: Thymidylate synthase (288 aa).

DUMP contacts are provided by residues Arg21 and Arg150–Arg151. Residue Cys170 is the Nucleophile of the active site. DUMP is bound by residues Arg190 to Asp193, Asn201, and His231 to Tyr233. Asp193 is a binding site for (6R)-5,10-methylene-5,6,7,8-tetrahydrofolate. Ala287 provides a ligand contact to (6R)-5,10-methylene-5,6,7,8-tetrahydrofolate.

This sequence belongs to the thymidylate synthase family. Bacterial-type ThyA subfamily. In terms of assembly, homodimer.

Its subcellular location is the cytoplasm. It catalyses the reaction dUMP + (6R)-5,10-methylene-5,6,7,8-tetrahydrofolate = 7,8-dihydrofolate + dTMP. It functions in the pathway pyrimidine metabolism; dTTP biosynthesis. In terms of biological role, catalyzes the reductive methylation of 2'-deoxyuridine-5'-monophosphate (dUMP) to 2'-deoxythymidine-5'-monophosphate (dTMP) while utilizing 5,10-methylenetetrahydrofolate (mTHF) as the methyl donor and reductant in the reaction, yielding dihydrofolate (DHF) as a by-product. This enzymatic reaction provides an intracellular de novo source of dTMP, an essential precursor for DNA biosynthesis. This is Thymidylate synthase from Acholeplasma laidlawii (strain PG-8A).